The primary structure comprises 230 residues: Transmembrane ascorbate ferrireductase 2 (230 aa).

Transmembrane regions (helical) follow at residues 5 to 25 (VLGG…IAAL) and 50 to 70 (VHPV…MLAY). The 205-residue stretch at 14-218 (VVRVLGFIIA…LGGFVILGVV (205 aa)) folds into the Cytochrome b561 domain. Heme b is bound at residue His-51. L-ascorbate contacts are provided by Lys-77 and Lys-81. Residues 82 to 102 (LVHLTLQLTAFILSLIGVWAA) form a helical membrane-spanning segment. His-84 lines the heme b pocket. Residues Phe-105, His-106, and Tyr-115 each coordinate monodehydro-L-ascorbate radical. Residue His-118 coordinates heme b. A helical membrane pass occupies residues 120–140 (WLGLACLFLFAFQWAAGFVTY). Positions 140, 150, and 151 each coordinate L-ascorbate. A heme b-binding site is contributed by His-157. The helical transmembrane segment at 157–177 (HVFLGISIYALALVTATTGIL) threads the bilayer. 2 residues coordinate monodehydro-L-ascorbate radical: Phe-182 and Asn-186. The chain crosses the membrane as a helical span at residues 198 to 218 (LVNTMGVLILILGGFVILGVV).

As to quaternary structure, homodimer. Heme b is required as a cofactor. In terms of tissue distribution, expressed in roots, seedlings, leaves and flowers. Expressed in the L1 layer of the shoot apex, in the epidermis of leaf primordia and young leaves and in vascular bundles. In the differentiation zone of the root, detected in the pericycle and in the epidermis, but not in the cortex. Strongly expressed in the cortical region of the root tip, in the meristematic tissue and in the epidermal cell layer of lateral roots, but not in the root caps. Highly expressed in unfertilized ovules. In mature embryos, expressed in the epidermis, cotyledon tips and root tips.

The protein localises to the membrane. It carries out the reaction Fe(3+)(out) + L-ascorbate(in) = monodehydro-L-ascorbate radical(in) + Fe(2+)(out) + H(+). In terms of biological role, two-heme-containing cytochrome. Catalyzes ascorbate-dependent transmembrane ferric-chelate reduction. The protein is Transmembrane ascorbate ferrireductase 2 (CYB561B) of Arabidopsis thaliana (Mouse-ear cress).